Reading from the N-terminus, the 249-residue chain is Secreted flagellin C (249 aa).

Interacts with FliS.

It is found in the secreted. Functionally, might play a role in virulence. This is Secreted flagellin C (flaC) from Campylobacter jejuni subsp. jejuni serotype O:6 (strain 81116 / NCTC 11828).